Reading from the N-terminus, the 1052-residue chain is ATP-dependent DNA helicase MPH1 (1052 aa).

The 168-residue stretch at 89 to 256 folds into the Helicase ATP-binding domain; that stretch reads IVRKGLLQNI…EVVNNLNISK (168 aa). 102-109 serves as a coordination point for ATP; that stretch reads IPTGMGKT. Residues 204–207 carry the DEAH box motif; sequence DEAH. The region spanning 432–649 is the Helicase C-terminal domain; it reads ELTQFFYENP…HLVQYRKSDR (218 aa). Disordered regions lie at residues 495–550, 798–832, 869–898, and 1002–1052; these read HGPK…NQKQ, IGDTRNKAKASSSMKVKKEPTMAVDHSDDEEDLPL, SKRQRLQPEVQPEVQPEVQPEVQPEVQPEV, and HTVS…DSDF. Positions 503–532 are enriched in basic and acidic residues; sequence SDREKRLEEERRMDEEKKQAALQEKLERTS. Residues 534 to 549 show a composition bias toward polar residues; the sequence is RTGSSEEAQLSGMNQK. Composition is skewed to low complexity over residues 875 to 898 and 1005 to 1028; these read QPEVQPEVQPEVQPEVQPEVQPEV and SQSQGQSNSQSQAHSTSQKSQQAS. The span at 1029-1040 shows a compositional bias: basic and acidic residues; that stretch reads QKDRSSQDKDLT. Residues 1043–1052 show a composition bias toward acidic residues; that stretch reads ELEDLLDSDF.

The protein belongs to the DEAD box helicase family. DEAH subfamily. FANCM sub-subfamily. In terms of assembly, interacts with the MHF histone-fold complex to form the FANCM-MHF complex.

It is found in the nucleus. It catalyses the reaction ATP + H2O = ADP + phosphate + H(+). ATP-dependent DNA helicase involved in DNA damage repair by homologous recombination and in genome maintenance. Capable of unwinding D-loops. Plays a role in limiting crossover recombinants during mitotic DNA double-strand break (DSB) repair. Component of a FANCM-MHF complex which promotes gene conversion at blocked replication forks, probably by reversal of the stalled fork. The sequence is that of ATP-dependent DNA helicase MPH1 from Candida glabrata (strain ATCC 2001 / BCRC 20586 / JCM 3761 / NBRC 0622 / NRRL Y-65 / CBS 138) (Yeast).